We begin with the raw amino-acid sequence, 210 residues long: Peptidyl-tRNA hydrolase (210 aa).

Residue Y15 coordinates tRNA. Catalysis depends on H20, which acts as the Proton acceptor. TRNA-binding residues include F66, N68, and N114. A disordered region spans residues 186–210; it reads IHTSKPPRPKPPRREPGDGGTPATA.

This sequence belongs to the PTH family. Monomer.

It is found in the cytoplasm. It catalyses the reaction an N-acyl-L-alpha-aminoacyl-tRNA + H2O = an N-acyl-L-amino acid + a tRNA + H(+). In terms of biological role, hydrolyzes ribosome-free peptidyl-tRNAs (with 1 or more amino acids incorporated), which drop off the ribosome during protein synthesis, or as a result of ribosome stalling. Its function is as follows. Catalyzes the release of premature peptidyl moieties from peptidyl-tRNA molecules trapped in stalled 50S ribosomal subunits, and thus maintains levels of free tRNAs and 50S ribosomes. The protein is Peptidyl-tRNA hydrolase of Variovorax paradoxus (strain S110).